We begin with the raw amino-acid sequence, 75 residues long: UPF0346 protein OB1736 (75 aa).

This sequence belongs to the UPF0346 family.

In Oceanobacillus iheyensis (strain DSM 14371 / CIP 107618 / JCM 11309 / KCTC 3954 / HTE831), this protein is UPF0346 protein OB1736.